The chain runs to 1007 residues: RNA-binding protein 26 (1007 aa).

Residue K94 forms a Glycyl lysine isopeptide (Lys-Gly) (interchain with G-Cter in SUMO2) linkage. K106 participates in a covalent cross-link: Glycyl lysine isopeptide (Lys-Gly) (interchain with G-Cter in SUMO1); alternate. K106 participates in a covalent cross-link: Glycyl lysine isopeptide (Lys-Gly) (interchain with G-Cter in SUMO2); alternate. The span at K106–K118 shows a compositional bias: basic and acidic residues. The tract at residues K106 to I241 is disordered. S127 carries the phosphoserine modification. The span at R134–R168 shows a compositional bias: basic and acidic residues. Positions Y169–S186 are enriched in basic residues. Composition is skewed to basic and acidic residues over residues W187–R201 and R209–P227. Polar residues predominate over residues L228–I241. The segment at P288 to D316 adopts a C3H1-type zinc-finger fold. Residues Q334 to Q388 show a composition bias toward pro residues. Disordered regions lie at residues Q334–P404 and I460–P519. The segment covering A394–P404 has biased composition (low complexity). S496 bears the Phosphoserine mark. K510 bears the N6-acetyllysine mark. S518 carries the post-translational modification Phosphoserine. Residues T532–E606 enclose the RRM 1 domain. Position 616 is a phosphoserine (S616). Coiled-coil stretches lie at residues D719–S795 and K823–K847. The disordered stretch occupies residues S853–A884. Positions R857–G877 are enriched in basic residues. Residues R891–P960 enclose the RRM 2 domain. The tract at residues A966–R1007 is disordered. Residues E968–N1000 show a composition bias toward acidic residues.

Its function is as follows. May be involved in the turnover of nuclear polyadenylated (pA+) RNA. The polypeptide is RNA-binding protein 26 (Homo sapiens (Human)).